The following is a 107-amino-acid chain: SH3 domain-binding glutamic acid-rich-like protein 2 (107 aa).

The SH3-binding signature appears at 61–67 (QGNPLPP).

Belongs to the SH3BGR family.

Its subcellular location is the nucleus. This Pongo abelii (Sumatran orangutan) protein is SH3 domain-binding glutamic acid-rich-like protein 2 (SH3BGRL2).